The chain runs to 314 residues: tRNA dimethylallyltransferase (314 aa).

The tract at residues 1–25 (MAEEPQRSPAPTSPFAFTVPSNSLS) is disordered. 40–47 (GPTASGKS) contributes to the ATP binding site. 42 to 47 (TASGKS) contacts substrate.

It belongs to the IPP transferase family. In terms of assembly, monomer. It depends on Mg(2+) as a cofactor.

It carries out the reaction adenosine(37) in tRNA + dimethylallyl diphosphate = N(6)-dimethylallyladenosine(37) in tRNA + diphosphate. Its function is as follows. Catalyzes the transfer of a dimethylallyl group onto the adenine at position 37 in tRNAs that read codons beginning with uridine, leading to the formation of N6-(dimethylallyl)adenosine (i(6)A). This Cereibacter sphaeroides (strain ATCC 17023 / DSM 158 / JCM 6121 / CCUG 31486 / LMG 2827 / NBRC 12203 / NCIMB 8253 / ATH 2.4.1.) (Rhodobacter sphaeroides) protein is tRNA dimethylallyltransferase.